The sequence spans 1655 residues: Protein scribble homolog (1655 aa).

The sufficient for targeting to adherens junction and to inhibit cell proliferation stretch occupies residues 1-818 (MLKCIPLWRC…MRVWRERMVE (818 aa)). At S37 the chain carries Phosphoserine. LRR repeat units follow at residues 37–58 (SLEE…FFRL), 60–81 (NLRK…VANF), 83–104 (QLVE…IKFC), 106–127 (ALEI…FTQL), 129–150 (SLAH…VGNL), 152–174 (NLVT…SFLV), 175–197 (KLEQ…GALP), 198–219 (NLRE…LGNL), 221–243 (RLVC…GGLV), 244–265 (LLTD…IGQL), 267–288 (QLSI…IGDC), 290–312 (NLSE…GKLT), 313–334 (KLTN…IGGC), 336–357 (ALSV…LAHT), 359–381 (ELHV…THLN), and 382–402 (LKAL…QTED). T378 carries the phosphothreonine modification. 3 disordered regions span residues 417–440 (PQQP…WSDA), 459–606 (DAEE…IRKD), and 628–702 (LLQG…VSAP). Residues 458 to 474 (EDAEEAAAEKRGLQRRA) are a coiled coil. T475 carries the phosphothreonine modification. A compositionally biased stretch (basic and acidic residues) spans 479–494 (SELKVMKRSIEGRRSE). Position 504 is a phosphoserine (S504). The segment covering 537–555 (EGPSAEAQGGSQQEATTAG) has biased composition (low complexity). Composition is skewed to acidic residues over residues 556-565 (GEEDAEEDYQ) and 660-694 (EEEE…EEDK). The stretch at 656–701 (RAQKEEEEEEEGSPQEEEEEEEEENRAEEEEASTEEEDKEGAVVSA) forms a coiled coil. S688 is subject to Phosphoserine. At T689 the chain carries Phosphothreonine. Residues S708 and S764 each carry the phosphoserine modification. Positions 717-1229 (IEPARIEEEE…SLESISSIDR (513 aa)) are interaction with ARHGEF7. The PDZ 1 domain occupies 728-815 (TLTILRQTGG…AVQMRVWRER (88 aa)). The tract at residues 728 to 1194 (TLTILRQTGG…TVLVCDGFEA (467 aa)) is required for interaction with VIM. Phosphothreonine is present on T826. The tract at residues 827-853 (PLRPEDDYSPRERRGGGLRLPLLPPES) is disordered. Positions 829-841 (RPEDDYSPRERRG) are enriched in basic and acidic residues. 4 positions are modified to phosphoserine: S835, S853, S875, and S939. PDZ domains follow at residues 862–950 (VACL…EREA), 1004–1093 (EIRL…RRDP), and 1100–1194 (ELCI…GFEA). The segment at 1105–1117 (KAPGERLGISIRG) is interaction with tick-borne encephalitis virus RNA-directed RNA polymerase NS5. Phosphoserine is present on residues S1140, S1220, S1223, S1226, S1232, S1276, S1279, S1295, S1298, S1306, and S1309. The span at 1227 to 1242 (IDRELSPEGPGKEKEL) shows a compositional bias: basic and acidic residues. The tract at residues 1227 to 1246 (IDRELSPEGPGKEKELPGQT) is disordered. Positions 1277 to 1489 (AGSVQRVPSG…APERALSPAE (213 aa)) are disordered. A compositionally biased stretch (pro residues) spans 1302–1311 (QQPPSPPSPD). A Phosphothreonine modification is found at T1342. S1348 carries the post-translational modification Phosphoserine. The span at 1353 to 1365 (SFRERQKYFELEV) shows a compositional bias: basic and acidic residues. The residue at position 1378 (S1378) is a Phosphoserine. Residues 1379-1419 (LVGADDLRKMQEEEARKLQQKRAQMLREAAEAGAEARLALD) are a coiled coil. The segment covering 1383–1395 (DDLRKMQEEEARK) has biased composition (basic and acidic residues). Positions 1409–1421 (EAGAEARLALDGE) are enriched in low complexity. Positions 1422–1432 (TLGEEEQEDEQ) are enriched in acidic residues. S1437, S1445, and S1448 each carry phosphoserine. Over residues 1461–1472 (AKAERRHQERLR) the composition is skewed to basic and acidic residues. Phosphoserine occurs at positions 1475, 1486, and 1508. Residues 1520-1568 (LSRSQEGRGTRGPLERLAEAPSPAPTPSPTPVEDLGPQTSTSPGRLPLS) form a disordered region. A compositionally biased stretch (basic and acidic residues) spans 1524–1537 (QEGRGTRGPLERLA). S1541 bears the Phosphoserine mark. T1545 carries the phosphothreonine modification. Phosphoserine occurs at positions 1547, 1561, and 1591. The tract at residues 1622 to 1655 (GRPSPGAVGPEDVALCSSRRPVRPGRRGLGPVPS) is disordered.

It belongs to the LAP (LRR and PDZ) protein family. In terms of assembly, interacts with UBE3A. Interacts with PAK1 and PAK2. Interacts (via PDZ domains) with VANGL2. Interacts (via PDZ domains) with LPP and TRIP6; the interaction is direct. Interacts (via PDZ domains) with TJP2. Interacts (via PDZ domains) with APC; may mediate APC targeting to adherens junctions of epithelial cells. Interacts (via PDZ domains) with TSHR; regulates TSHR trafficking and function. Interacts with ARHGEF7 and GIT1; interacts directly with ARHGEF7. Interacts with CTNNB1. Interacts with MAPK12. Interacts (via PDZ domains 1 and 3) with MCC. Interacts with DLG5. Interacts with STK4/MST1 and LATS1 in the presence of DLG5. Interacts (via PDZ domain 3) with CRTAM (via PDZ-binding motif); the interaction promotes CRTAM and SCRIB polarization in a subset of CD4+ T-cells. Interacts with YES1, when YES1 is in a closed conformation; the interaction facilitates YES1 autophosphorylation. Interacts (via PDZ domains) with VIM; the interaction protects SCRIB from proteasomal degradation and facilitates SCRIB localization to intermediate filaments, the interaction is reduced by cell contact inhibition. (Microbial infection) Interacts (via fourth PDZ domain) with tick-borne encephalitis virus RNA-directed RNA polymerase NS5; this interaction targets viral NS5 to the cell membrane periphery and nucleus and prevents STAT1 phosphorylation, and thus, the activation of the JAK-STAT signaling pathway. Interacts with HPV E6. Interacts with influenza A virus protein NS1; the interaction results in the translocation of SCRIB from the cell membrane to perinuclear puncta. In terms of processing, ubiquitinated; targeted for UBE3A-dependent multiubiquitination in the presence of high-risk HPV E6 proteins and degraded. Palmitoylated. Could be depalmitoylated by LYPLA1 and/or LYPLA2. Palmitoylation of SCRIB by ZDHHC7 is required for its localization to cell-cell junctions, function in the establishement of epithelial cell polarity and the regulation of downstream signaling pathways important for epithelial cell differentiation. Expressed in kidney, skeletal muscles, liver, lung, breast, intestine, placenta and skin mainly in epithelial cells (at protein level).

The protein localises to the cell membrane. The protein resides in the cell junction. It is found in the adherens junction. Its subcellular location is the cell projection. It localises to the lamellipodium. The protein localises to the cytoplasm. The protein resides in the postsynapse. It is found in the presynapse. Scaffold protein involved in different aspects of polarized cell differentiation regulating epithelial and neuronal morphogenesis and T-cell polarization. Via its interaction with CRTAM, required for the late phase polarization of a subset of CD4+ T-cells, which in turn regulates TCR-mediated proliferation and IFNG and IL22 production. Plays a role in cell directional movement, cell orientation, cell sheet organization and Golgi complex polarization at the cell migration front. Promotes epithelial cell layer barrier function via maintaining cell-cell adhesion. Most probably functions in the establishment of apico-basal cell polarity. May function in cell proliferation regulating progression from G1 to S phase and as a positive regulator of apoptosis for instance during acinar morphogenesis of the mammary epithelium. May regulate cell invasion via MAPK-mediated cell migration and adhesion. May play a role in exocytosis and in the targeting of synaptic vesicles to synapses. Functions as an activator of Rac GTPase activity. This chain is Protein scribble homolog, found in Homo sapiens (Human).